The chain runs to 447 residues: ATP-dependent protease ATPase subunit HslU (447 aa).

Residues I18, 60 to 65 (GVGKTE), D259, E325, and R397 contribute to the ATP site.

This sequence belongs to the ClpX chaperone family. HslU subfamily. As to quaternary structure, a double ring-shaped homohexamer of HslV is capped on each side by a ring-shaped HslU homohexamer. The assembly of the HslU/HslV complex is dependent on binding of ATP.

It localises to the cytoplasm. In terms of biological role, ATPase subunit of a proteasome-like degradation complex; this subunit has chaperone activity. The binding of ATP and its subsequent hydrolysis by HslU are essential for unfolding of protein substrates subsequently hydrolyzed by HslV. HslU recognizes the N-terminal part of its protein substrates and unfolds these before they are guided to HslV for hydrolysis. The protein is ATP-dependent protease ATPase subunit HslU of Burkholderia pseudomallei (strain 668).